The sequence spans 146 residues: Hemoglobin subunit beta (146 aa).

Positions 2–146 constitute a Globin domain; the sequence is HWTAEEKQLI…VAHALARKYH (145 aa). Heme b contacts are provided by His63 and His92.

The protein belongs to the globin family. As to quaternary structure, heterotetramer of two alpha chains and two beta chains. Red blood cells.

Involved in oxygen transport from the lung to the various peripheral tissues. In Ciconia ciconia (White stork), this protein is Hemoglobin subunit beta (HBB).